The sequence spans 799 residues: DNA ligase (799 aa).

Over residues 1–11 the composition is skewed to basic and acidic residues; it reads MTEVKTGRVVD. A disordered region spans residues 1 to 35; the sequence is MTEVKTGRVVDDAPVNDAPENNAAEATSPARHDAI. NAD(+) is bound by residues 67-71, 116-117, and D147; these read DAEYD and SL. The active-site N6-AMP-lysine intermediate is K149. 4 residues coordinate NAD(+): R170, E207, K327, and K351. Zn(2+) is bound by residues C445, C448, C463, and C468. A BRCT domain is found at 634–723; sequence AIVLPLQGLK…VASVDASEAV (90 aa). The disordered stretch occupies residues 720 to 799; that stretch reads SEAVAEETPP…RGRAEQLKLF (80 aa). The segment covering 755–767 has biased composition (low complexity); that stretch reads GSASGDDSRGAAA. Positions 787–799 are enriched in basic and acidic residues; the sequence is DVPRGRAEQLKLF.

It belongs to the NAD-dependent DNA ligase family. LigA subfamily. Mg(2+) serves as cofactor. It depends on Mn(2+) as a cofactor.

The enzyme catalyses NAD(+) + (deoxyribonucleotide)n-3'-hydroxyl + 5'-phospho-(deoxyribonucleotide)m = (deoxyribonucleotide)n+m + AMP + beta-nicotinamide D-nucleotide.. Its function is as follows. DNA ligase that catalyzes the formation of phosphodiester linkages between 5'-phosphoryl and 3'-hydroxyl groups in double-stranded DNA using NAD as a coenzyme and as the energy source for the reaction. It is essential for DNA replication and repair of damaged DNA. The protein is DNA ligase of Nitratidesulfovibrio vulgaris (strain ATCC 29579 / DSM 644 / CCUG 34227 / NCIMB 8303 / VKM B-1760 / Hildenborough) (Desulfovibrio vulgaris).